Reading from the N-terminus, the 631-residue chain is tRNA uridine 5-carboxymethylaminomethyl modification enzyme MnmG (631 aa).

FAD is bound at residue 13–18 (GGGHAG). 273 to 287 (GPRYCPSIEDKVNRF) is an NAD(+) binding site.

Belongs to the MnmG family. As to quaternary structure, homodimer. Heterotetramer of two MnmE and two MnmG subunits. FAD serves as cofactor.

The protein localises to the cytoplasm. Functionally, NAD-binding protein involved in the addition of a carboxymethylaminomethyl (cmnm) group at the wobble position (U34) of certain tRNAs, forming tRNA-cmnm(5)s(2)U34. The chain is tRNA uridine 5-carboxymethylaminomethyl modification enzyme MnmG from Chromohalobacter salexigens (strain ATCC BAA-138 / DSM 3043 / CIP 106854 / NCIMB 13768 / 1H11).